The sequence spans 107 residues: EPIDERMAL PATTERNING FACTOR-like protein 3 (107 aa).

Positions 1 to 24 are cleaved as a signal peptide; it reads MEYMFLLMSKFFFVFPIIIYIGPA. Cystine bridges form between C64–C102, C68–C74, and C71–C104.

This sequence belongs to the plant cysteine rich small secretory peptide family. Epidermal patterning factor subfamily.

Its subcellular location is the secreted. Functionally, controls stomatal patterning. The sequence is that of EPIDERMAL PATTERNING FACTOR-like protein 3 from Arabidopsis thaliana (Mouse-ear cress).